Reading from the N-terminus, the 104-residue chain is Large ribosomal subunit protein uL24 (104 aa).

The protein belongs to the universal ribosomal protein uL24 family. Part of the 50S ribosomal subunit.

Functionally, one of two assembly initiator proteins, it binds directly to the 5'-end of the 23S rRNA, where it nucleates assembly of the 50S subunit. In terms of biological role, one of the proteins that surrounds the polypeptide exit tunnel on the outside of the subunit. This chain is Large ribosomal subunit protein uL24, found in Bradyrhizobium diazoefficiens (strain JCM 10833 / BCRC 13528 / IAM 13628 / NBRC 14792 / USDA 110).